The following is a 289-amino-acid chain: NAD(P)H-hydrate epimerase (289 aa).

In terms of domain architecture, YjeF N-terminal spans 71–277; it reads AQTIDNELMS…SIVEKYNLKI (207 aa). 122–126 is a (6S)-NADPHX binding site; it reads NNGGD. K(+)-binding residues include Asn123 and Asp185. Residues 189 to 195 and Asp218 contribute to the (6S)-NADPHX site; that span reads GFSFRGE. Ser221 provides a ligand contact to K(+).

This sequence belongs to the NnrE/AIBP family. K(+) serves as cofactor.

It carries out the reaction (6R)-NADHX = (6S)-NADHX. The enzyme catalyses (6R)-NADPHX = (6S)-NADPHX. Functionally, catalyzes the epimerization of the S- and R-forms of NAD(P)HX, a damaged form of NAD(P)H that is a result of enzymatic or heat-dependent hydration. This is a prerequisite for the S-specific NAD(P)H-hydrate dehydratase to allow the repair of both epimers of NAD(P)HX. This chain is NAD(P)H-hydrate epimerase, found in Plasmodium knowlesi (strain H).